A 338-amino-acid chain; its full sequence is Methionine aminopeptidase 1D, mitochondrial (338 aa).

The transit peptide at 1–47 directs the protein to the mitochondrion; that stretch reads MAAPCAAQCLYRTGGLRLLQRISRLPHCHKDASLAHQCQFHRSFFWR. Substrate is bound at residue His-164. Asp-181, Asp-192, and His-255 together coordinate a divalent metal cation. His-262 provides a ligand contact to substrate. Positions 287 and 318 each coordinate a divalent metal cation.

It belongs to the peptidase M24A family. Methionine aminopeptidase type 1 subfamily. Co(2+) is required as a cofactor. Zn(2+) serves as cofactor. Requires Mn(2+) as cofactor. It depends on Fe(2+) as a cofactor.

It is found in the mitochondrion. It carries out the reaction Release of N-terminal amino acids, preferentially methionine, from peptides and arylamides.. In terms of biological role, removes the N-terminal methionine from nascent proteins. The N-terminal methionine is often cleaved when the second residue in the primary sequence is small and uncharged (Met-Ala-, Cys, Gly, Pro, Ser, Thr, or Val). Requires deformylation of the N(alpha)-formylated initiator methionine before it can be hydrolyzed. In Danio rerio (Zebrafish), this protein is Methionine aminopeptidase 1D, mitochondrial (metap1d).